Here is a 323-residue protein sequence, read N- to C-terminus: Ubiquinone biosynthesis protein COQ4, mitochondrial (323 aa).

Residues 1–29 (MLKSTVSNTRIKCCRIDQRRNYLFTALAS) constitute a mitochondrion transit peptide. Zn(2+) is bound by residues H205, D206, H209, and E221.

The protein belongs to the COQ4 family. In terms of assembly, component of a multi-subunit COQ enzyme complex, composed of at least COQ3, COQ4, COQ5, COQ6, COQ7 and COQ9. The cofactor is Zn(2+).

The protein resides in the mitochondrion inner membrane. It carries out the reaction a 4-hydroxy-3-methoxy-5-(all-trans-polyprenyl)benzoate + H(+) = a 2-methoxy-6-(all-trans-polyprenyl)phenol + CO2. It participates in cofactor biosynthesis; ubiquinone biosynthesis. Its function is as follows. Lyase that catalyzes the C1-decarboxylation of 4-hydroxy-3-methoxy-5-(all-trans-polyprenyl)benzoic acid into 2-methoxy-6-(all-trans-polyprenyl)phenol during ubiquinone biosynthesis. This Candida dubliniensis (strain CD36 / ATCC MYA-646 / CBS 7987 / NCPF 3949 / NRRL Y-17841) (Yeast) protein is Ubiquinone biosynthesis protein COQ4, mitochondrial.